The primary structure comprises 347 residues: Haptoglobin (347 aa).

The signal sequence occupies residues 1-18 (MRALGAVITLLLWGQLFA). The Sushi domain maps to 31-88 (DSCPKPPEIANGYVEHLVRYQCKNYYRLRTEGDGVYALNSEKQWVNKAVGEQLPECEA). 2 disulfides stabilise this stretch: C52–C86 and C90–C207. Residues 103–345 (IIGGSLDAKG…ILDWIQKTIA (243 aa)) enclose the Peptidase S1 domain. N-linked (GlcNAc...) asparagine glycosylation is found at N148, N152, N182, N230, and N256. 2 cysteine pairs are disulfide-bonded: C250–C281 and C292–C322. Positions 259–264 (VPENKI) are interaction with CD163.

Belongs to the peptidase S1 family. In terms of assembly, tetramer of two alpha and two beta chains; disulfide-linked. The hemoglobin/haptoglobin complex is composed of a haptoglobin dimer bound to two hemoglobin alpha-beta dimers. Interacts with CD163. Interacts with ERGIC3. As to expression, expressed by the liver and secreted in plasma.

The protein resides in the secreted. Functionally, as a result of hemolysis, hemoglobin is found to accumulate in the kidney and is secreted in the urine. Haptoglobin captures, and combines with free plasma hemoglobin to allow hepatic recycling of heme iron and to prevent kidney damage. Haptoglobin also acts as an antioxidant, has antibacterial activity and plays a role in modulating many aspects of the acute phase response. Hemoglobin/haptoglobin complexes are rapidly cleared by the macrophage CD163 scavenger receptor expressed on the surface of liver Kupfer cells through an endocytic lysosomal degradation pathway. In Oryctolagus cuniculus (Rabbit), this protein is Haptoglobin (HP).